We begin with the raw amino-acid sequence, 463 residues long: Argininosuccinate lyase (463 aa).

It belongs to the lyase 1 family. Argininosuccinate lyase subfamily.

It localises to the cytoplasm. The catalysed reaction is 2-(N(omega)-L-arginino)succinate = fumarate + L-arginine. The protein operates within amino-acid biosynthesis; L-arginine biosynthesis; L-arginine from L-ornithine and carbamoyl phosphate: step 3/3. The polypeptide is Argininosuccinate lyase (Prochlorococcus marinus (strain NATL1A)).